We begin with the raw amino-acid sequence, 528 residues long: OLD nuclease (528 aa).

The interval 1–153 (MLKRLQVKNF…LAQHLPSIRG (153 aa)) is ATPase domain N-terminus. Residue 31 to 35 (GAGKT) participates in ATP binding. A dimerization domain region spans residues 154-245 (SILGRLLQPV…RESDLTLPGD (92 aa)). The ATPase domain C-terminus stretch occupies residues 246-369 (ELGLGIQSAI…FDTARNEVLF (124 aa)). The segment at 370–528 (AKRALLVEGY…IRQVTRPMEE (159 aa)) is toprim domain. Residues Glu-377, Asp-381, Asp-431, and Asp-433 each contribute to the a divalent metal cation site. The disordered stretch occupies residues 440 to 461 (RADEETRRKQEQENKAEQEKNQ). The a divalent metal cation site is built by Ser-478 and Glu-480. Arg-487 functions as the Stabilizes transition state or protonates leaving group in the catalytic mechanism.

This sequence belongs to the class 1 OLD nuclease family. As to quaternary structure, homodimer. It depends on Mg(2+) as a cofactor. Requires Mn(2+) as cofactor. The cofactor is Ca(2+).

The enzyme catalyses Exonucleolytic cleavage in the 5'- to 3'-direction to yield nucleoside 5'-phosphates.. In terms of biological role, an exodeoxyribonuclease that degrades linear or supercoiled dsDNA from 5'-3'. Nicks and linearizes circular DNA. Activity is not stimulated by ATP or AMP-PNP, although it has DNA-stimulated ATPase activity. This is OLD nuclease from Thermus scotoductus (strain ATCC 700910 / SA-01).